The sequence spans 354 residues: Protein OVEREXPRESSOR OF CATIONIC PEROXIDASE 3 (354 aa).

Positions 63–70 (NRKGFVSS) match the Nuclear localization signal 1 motif. Disordered regions lie at residues 65–98 (KGFV…EDPF) and 151–186 (TGDV…PTKL). The segment covering 154-181 (VDVDVDNDDDDNDDDDNDDDDDDSEEDE) has biased composition (acidic residues). The Nuclear localization signal 2 motif lies at 191-198 (LKRLAYAL). A disordered region spans residues 243 to 264 (KPPVAAPENSSPDPSPVESLSA). The homeobox DNA-binding region spans 286–345 (RWSAQKRVKKAHIETLEKVYRRSKRPTNAVVSSIVQVTNLPRKRVLKWFEDKRAEDGVPD). The Nuclear localization signal 3 motif lies at 293–300 (VKKAHIET).

The protein resides in the nucleus. In terms of biological role, may modulate chromatin structure by regulation of nucleosome assembly/disassembly. Homeodomain transcription factor that mediates jasmonic acid (JA)-mediated COI1-dependent and abscisic acid (ABA)-mediated PMR4-dependent resistance to infection by necrotrophic fungal pathogens (e.g. B.cinerea and P.cucumerina) and bacterial pathogens (e.g. P.syringae DC3000); this resistance involves at least callose deposition. Required for the P.fluorescens WCS417r-triggered JA-dependent induced systemic resistance (ISR) against both P.syringae DC3000 and H.arabidopsidis. Negative regulator of the ABA-dependent drought resistance. This Arabidopsis thaliana (Mouse-ear cress) protein is Protein OVEREXPRESSOR OF CATIONIC PEROXIDASE 3.